The primary structure comprises 194 residues: Cysteine and glycine-rich protein 2 (194 aa).

The 52-residue stretch at 10 to 61 (CGACGRTVYHAEEVQCDGRSFHRCCFLCMVCRKNLDSTTVAIHDAEVYCKSC) folds into the LIM zinc-binding 1 domain. The Nuclear localization signal motif lies at 64 to 69 (KKYGPK). The disordered stretch occupies residues 85 to 110 (GERLGIKPESSPSPHRPTTNPNTSKF). A compositionally biased stretch (polar residues) spans 94–110 (SSPSPHRPTTNPNTSKF). Residues 120-171 (CSRCGDSVYAAEKVIGAGKPWHKNCFRCAKCGKSLESTTLTEKEGEIYCKGC) enclose the LIM zinc-binding 2 domain.

It localises to the nucleus. In terms of biological role, interacts with zyxin. May be a component of a signal transduction pathway that mediates adhesion-stimulated changes in gene expression. Totally down-regulated in transformed cells. The sequence is that of Cysteine and glycine-rich protein 2 (CSRP2) from Coturnix japonica (Japanese quail).